An 80-amino-acid polypeptide reads, in one-letter code: U6-ctenitoxin-Pn1a (80 aa).

An N-terminal signal peptide occupies residues 1 to 21 (MWLKIQVFVLALALITLGIQA). A propeptide spanning residues 22-37 (EPNSGPNNPLIQEEAR) is cleaved from the precursor. Intrachain disulfides connect Cys39-Cys54, Cys46-Cys59, Cys53-Cys69, and Cys61-Cys67. Positions 72 to 80 (TLGDLFGRR) are excised as a propeptide.

This sequence belongs to the neurotoxin 02 (plectoxin) family. 01 (Tx3) subfamily. Expressed by the venom gland.

The protein localises to the secreted. In terms of biological role, antagonist of L-type calcium channels (Cav1/CACNA1). The sequence is that of U6-ctenitoxin-Pn1a from Phoneutria nigriventer (Brazilian armed spider).